A 317-amino-acid polypeptide reads, in one-letter code: Ubiquinone biosynthesis protein COQ9-A, mitochondrial (317 aa).

The N-terminal 46 residues, 1–46, are a transit peptide targeting the mitochondrion; sequence MAASVTRVLKGAGGRQLLLMVARRRPVLMQPFLLMPRKFWVSSALR. A disordered region spans residues 50–97; that stretch reads QRQPPFSASSTHAETQGHAEEQYQQKQPPPRYTDQAGEESEGYESEEQ. Polar residues predominate over residues 53–63; sequence PPFSASSTHAE. A compositionally biased stretch (acidic residues) spans 85–96; the sequence is AGEESEGYESEE. An a 1,2-diacylglycero-3-phosphoethanolamine-binding site is contributed by Arg-243.

Belongs to the COQ9 family. As to quaternary structure, homodimer. Heterodimer; two heterodimers of COQ7:COQ9 come together on the same side of the lipid pseudo-bilayer and form a curved tetramer with a hydrophobic surface suitable for membrane interaction. These two tetramers assemble into a soluble octamer with a pseudo-bilayer of lipids captured within. Interacts with COQ7; this interaction allows ubiquinone (CoQ) isoprene intermediates presentation to COQ7 and facilitates the COQ7-mediated hydroxylase step.

Its subcellular location is the mitochondrion. Its pathway is cofactor biosynthesis; ubiquinone biosynthesis. Membrane-associated protein that warps the membrane surface to access and bind aromatic isoprenes with high specificity, including ubiquinone (CoQ) isoprene intermediates and presents them directly to COQ7, therefore facilitating the COQ7-mediated hydroxylase step. Participates in the biosynthesis of coenzyme Q, also named ubiquinone, an essential lipid-soluble electron transporter for aerobic cellular respiration. This Xenopus laevis (African clawed frog) protein is Ubiquinone biosynthesis protein COQ9-A, mitochondrial (coq9-a).